The primary structure comprises 41 residues: uncharacterized protein (41 aa).

A compositionally biased stretch (basic and acidic residues) spans 1–12 (MTRNVVRQEFEA). The interval 1-23 (MTRNVVRQEFEAPGKPQDSSQQD) is disordered.

This is an uncharacterized protein from Homo sapiens (Human).